The following is an 83-amino-acid chain: ATP synthase subunit c 2 (83 aa).

2 consecutive transmembrane segments (helical) span residues 8–28 (IASI…PALG) and 58–78 (LAMI…LLFA).

It belongs to the ATPase C chain family. In terms of assembly, F-type ATPases have 2 components, F(1) - the catalytic core - and F(0) - the membrane proton channel. F(1) has five subunits: alpha(3), beta(3), gamma(1), delta(1), epsilon(1). F(0) has four main subunits: a(1), b(1), b'(1) and c(10-14). The alpha and beta chains form an alternating ring which encloses part of the gamma chain. F(1) is attached to F(0) by a central stalk formed by the gamma and epsilon chains, while a peripheral stalk is formed by the delta, b and b' chains.

The protein localises to the cell inner membrane. Its function is as follows. F(1)F(0) ATP synthase produces ATP from ADP in the presence of a proton or sodium gradient. F-type ATPases consist of two structural domains, F(1) containing the extramembraneous catalytic core and F(0) containing the membrane proton channel, linked together by a central stalk and a peripheral stalk. During catalysis, ATP synthesis in the catalytic domain of F(1) is coupled via a rotary mechanism of the central stalk subunits to proton translocation. Key component of the F(0) channel; it plays a direct role in translocation across the membrane. A homomeric c-ring of between 10-14 subunits forms the central stalk rotor element with the F(1) delta and epsilon subunits. In Cereibacter sphaeroides (strain ATCC 17029 / ATH 2.4.9) (Rhodobacter sphaeroides), this protein is ATP synthase subunit c 2.